We begin with the raw amino-acid sequence, 953 residues long: 26S proteasome non-ATPase regulatory subunit 1 (953 aa).

Position 1 is an N-acetylmethionine (Met1). Thr273 is modified (phosphothreonine). The segment at 277–319 (SVPGSTNTGTVPGSEKDSDPMETEEKTASAVAGKTPDASPEPK) is disordered. Position 290 is a phosphoserine (Ser290). Basic and acidic residues predominate over residues 290 to 303 (SEKDSDPMETEEKT). Lys310 bears the N6-acetyllysine mark. Thr311 carries the phosphothreonine modification. Ser315 bears the Phosphoserine mark. 10 PC repeats span residues 403 to 436 (TATASLGVIHKGHEKEALQLMATYLPKDTSPGSA), 441 to 474 (GGLYALGLIHANHGGDIIDYLLNQLKNASNDIVR), 476 to 510 (GGSLGLGLAAMGTARQDVYDLLKTNLYQDDAVTGE), 511 to 545 (AAGLALGLVMLGSKNAQAIEDMVGYAQETQHEKIL), 547 to 580 (GLAVGIALVMYGRMEEADALIESLCRDKDPILRR), 581 to 616 (SGMYTVAMAYCGSGNNKAIRRLLHVAVSDVNDDVRR), 617 to 649 (AAVESLGFILFRTPEQCPSVVSLLSESYNPHVR), 651 to 685 (GAAMALGICCAGTGNKEAINLLEPMTNDPVNYVRQ), 686 to 726 (GALI…DVMA), and 729 to 761 (GAILAQGILDAGGHNVTISLQSRTGHTHMPSVV). Residue Lys720 is modified to N6-acetyllysine. Thr830 bears the Phosphothreonine mark. At Ser834 the chain carries Phosphoserine. Disordered regions lie at residues 839 to 881 (AKKK…LDNP) and 930 to 953 (AHGPKIEEEEQEPEPPEPFEYIDD). Basic and acidic residues-rich tracts occupy residues 842–852 (KEKEKEKKEEE) and 859–872 (AEKKEEKEKKKEPE). The span at 936-953 (EEEEQEPEPPEPFEYIDD) shows a compositional bias: acidic residues.

This sequence belongs to the proteasome subunit S1 family. As to quaternary structure, component of the 19S proteasome regulatory particle complex. The 26S proteasome consists of a 20S core particle (CP) and two 19S regulatory subunits (RP). The regulatory particle is made of a lid composed of 9 subunits, a base containing 6 ATPases and few additional components including PSMD1. Interacts with ADRM1. Interacts with ZFAND1.

Its function is as follows. Component of the 26S proteasome, a multiprotein complex involved in the ATP-dependent degradation of ubiquitinated proteins. This complex plays a key role in the maintenance of protein homeostasis by removing misfolded or damaged proteins, which could impair cellular functions, and by removing proteins whose functions are no longer required. Therefore, the proteasome participates in numerous cellular processes, including cell cycle progression, apoptosis, or DNA damage repair. In Mus musculus (Mouse), this protein is 26S proteasome non-ATPase regulatory subunit 1 (Psmd1).